Reading from the N-terminus, the 165-residue chain is 3-isopropylmalate dehydratase small subunit (165 aa).

The protein belongs to the LeuD family. LeuD type 2 subfamily. As to quaternary structure, heterodimer of LeuC and LeuD.

It catalyses the reaction (2R,3S)-3-isopropylmalate = (2S)-2-isopropylmalate. Its pathway is amino-acid biosynthesis; L-leucine biosynthesis; L-leucine from 3-methyl-2-oxobutanoate: step 2/4. Functionally, catalyzes the isomerization between 2-isopropylmalate and 3-isopropylmalate, via the formation of 2-isopropylmaleate. This chain is 3-isopropylmalate dehydratase small subunit, found in Saccharolobus islandicus (strain M.16.27) (Sulfolobus islandicus).